We begin with the raw amino-acid sequence, 197 residues long: Endoribonuclease YbeY (197 aa).

Zn(2+) contacts are provided by His156, His160, and His166.

Belongs to the endoribonuclease YbeY family. The cofactor is Zn(2+).

Its subcellular location is the cytoplasm. Single strand-specific metallo-endoribonuclease involved in late-stage 70S ribosome quality control and in maturation of the 3' terminus of the 16S rRNA. In Cupriavidus metallidurans (strain ATCC 43123 / DSM 2839 / NBRC 102507 / CH34) (Ralstonia metallidurans), this protein is Endoribonuclease YbeY.